A 336-amino-acid polypeptide reads, in one-letter code: Ketol-acid reductoisomerase (NADP(+)) 1 (336 aa).

Residues 2–181 enclose the KARI N-terminal Rossmann domain; that stretch reads AKVYYEKDVT…GATRAGVLET (180 aa). NADP(+)-binding positions include 25–28, arginine 48, serine 52, and 82–85; these read YGSQ and DELQ. The active site involves histidine 107. Glycine 133 is an NADP(+) binding site. The 146-residue stretch at 182-327 folds into the KARI C-terminal knotted domain; sequence TFKEETETDL…RKLREMMPFV (146 aa). Mg(2+) is bound by residues aspartate 190, glutamate 194, glutamate 226, and glutamate 230. Serine 251 lines the substrate pocket.

The protein belongs to the ketol-acid reductoisomerase family. Mg(2+) is required as a cofactor.

The catalysed reaction is (2R)-2,3-dihydroxy-3-methylbutanoate + NADP(+) = (2S)-2-acetolactate + NADPH + H(+). It carries out the reaction (2R,3R)-2,3-dihydroxy-3-methylpentanoate + NADP(+) = (S)-2-ethyl-2-hydroxy-3-oxobutanoate + NADPH + H(+). It participates in amino-acid biosynthesis; L-isoleucine biosynthesis; L-isoleucine from 2-oxobutanoate: step 2/4. It functions in the pathway amino-acid biosynthesis; L-valine biosynthesis; L-valine from pyruvate: step 2/4. In terms of biological role, involved in the biosynthesis of branched-chain amino acids (BCAA). Catalyzes an alkyl-migration followed by a ketol-acid reduction of (S)-2-acetolactate (S2AL) to yield (R)-2,3-dihydroxy-isovalerate. In the isomerase reaction, S2AL is rearranged via a Mg-dependent methyl migration to produce 3-hydroxy-3-methyl-2-ketobutyrate (HMKB). In the reductase reaction, this 2-ketoacid undergoes a metal-dependent reduction by NADPH to yield (R)-2,3-dihydroxy-isovalerate. The sequence is that of Ketol-acid reductoisomerase (NADP(+)) 1 from Bacillus cereus (strain ATCC 10987 / NRS 248).